A 542-amino-acid chain; its full sequence is Mitogen-activated protein kinase 14 (542 aa).

The region spanning 13–304 is the Protein kinase domain; it reads YKIEEVIGKG…AEEALADPYF (292 aa). ATP contacts are provided by residues 19–27 and lysine 42; that span reads IGKGSYGVV. Aspartate 139 serves as the catalytic Proton acceptor. A Phosphothreonine modification is found at threonine 175. Positions 175–177 match the TXY motif; that stretch reads TDY. At tyrosine 177 the chain carries Phosphotyrosine. Disordered stretches follow at residues 388 to 412 and 482 to 542; these read STAA…DNRP and RNPA…SGHW. Over residues 488–507 the composition is skewed to polar residues; that stretch reads PNSSVPLGSSYPRRNQTCKS.

The protein belongs to the protein kinase superfamily. CMGC Ser/Thr protein kinase family. MAP kinase subfamily. Dually phosphorylated on Thr-175 and Tyr-177, which activates the enzyme.

It carries out the reaction L-seryl-[protein] + ATP = O-phospho-L-seryl-[protein] + ADP + H(+). The enzyme catalyses L-threonyl-[protein] + ATP = O-phospho-L-threonyl-[protein] + ADP + H(+). With respect to regulation, activated by threonine and tyrosine phosphorylation. The chain is Mitogen-activated protein kinase 14 (MPK14) from Oryza sativa subsp. japonica (Rice).